A 236-amino-acid chain; its full sequence is Small ribosomal subunit protein uS3 (236 aa).

The region spanning 39–107 (IREFLTEELK…DTSLNIVEVR (69 aa)) is the KH type-2 domain. The interval 214–236 (ASERRAVEGDNQGSSSNRRRENA) is disordered.

Belongs to the universal ribosomal protein uS3 family. Part of the 30S ribosomal subunit. Forms a tight complex with proteins S10 and S14.

Its function is as follows. Binds the lower part of the 30S subunit head. Binds mRNA in the 70S ribosome, positioning it for translation. The chain is Small ribosomal subunit protein uS3 from Brucella suis (strain ATCC 23445 / NCTC 10510).